The chain runs to 307 residues: Pantothenate kinase (307 aa).

An ATP-binding site is contributed by 87-94; it reads GSVAVGKS.

Belongs to the prokaryotic pantothenate kinase family.

Its subcellular location is the cytoplasm. It carries out the reaction (R)-pantothenate + ATP = (R)-4'-phosphopantothenate + ADP + H(+). Its pathway is cofactor biosynthesis; coenzyme A biosynthesis; CoA from (R)-pantothenate: step 1/5. The polypeptide is Pantothenate kinase (Vibrio vulnificus (strain CMCP6)).